A 347-amino-acid polypeptide reads, in one-letter code: Cytosolic sulfotransferase 14 (347 aa).

A 3'-phosphoadenylyl sulfate-binding site is contributed by 87-92 (KSGTTW). His155 functions as the Proton acceptor in the catalytic mechanism. 3'-phosphoadenylyl sulfate-binding positions include Arg177, Ser185, Tyr244, and 310–312 (RKG).

The protein belongs to the sulfotransferase 1 family.

It localises to the cytoplasm. Its function is as follows. Sulfotransferase that utilizes 3'-phospho-5'-adenylyl sulfate (PAPS) as sulfonate donor. Not active with 11-hydroxyjasmonate or 12-hydroxyjasmonate. The polypeptide is Cytosolic sulfotransferase 14 (SOT14) (Arabidopsis thaliana (Mouse-ear cress)).